Here is a 919-residue protein sequence, read N- to C-terminus: Valine--tRNA ligase (919 aa).

The 'HIGH' region signature appears at 46–56; it reads PNVTGTLHMGH. Residues 528 to 532 carry the 'KMSKS' region motif; that stretch reads KMSKS. An ATP-binding site is contributed by Lys531. The stretch at 849-919 forms a coiled coil; it reads LAGLVDIEAE…KTLEKKEALG (71 aa).

This sequence belongs to the class-I aminoacyl-tRNA synthetase family. ValS type 1 subfamily. As to quaternary structure, monomer.

It is found in the cytoplasm. It catalyses the reaction tRNA(Val) + L-valine + ATP = L-valyl-tRNA(Val) + AMP + diphosphate. Catalyzes the attachment of valine to tRNA(Val). As ValRS can inadvertently accommodate and process structurally similar amino acids such as threonine, to avoid such errors, it has a 'posttransfer' editing activity that hydrolyzes mischarged Thr-tRNA(Val) in a tRNA-dependent manner. The polypeptide is Valine--tRNA ligase (Francisella tularensis subsp. tularensis (strain SCHU S4 / Schu 4)).